The following is a 200-amino-acid chain: Small ribosomal subunit protein eS8A (200 aa).

The segment at 1–31 (MGISRDSRHKRSATGAKRAQFRKKRKFELGR) is disordered. Thr62 bears the Phosphothreonine mark. 4 positions are modified to phosphoserine: Ser66, Ser69, Ser73, and Ser86. Thr107 is subject to Phosphothreonine. Phosphoserine is present on residues Ser154, Ser155, Ser158, and Ser161.

Belongs to the eukaryotic ribosomal protein eS8 family. As to quaternary structure, component of the small ribosomal subunit (SSU). Mature yeast ribosomes consist of a small (40S) and a large (60S) subunit. The 40S small subunit contains 1 molecule of ribosomal RNA (18S rRNA) and 33 different proteins (encoded by 57 genes). The large 60S subunit contains 3 rRNA molecules (25S, 5.8S and 5S rRNA) and 46 different proteins (encoded by 81 genes).

The protein resides in the cytoplasm. Functionally, component of the ribosome, a large ribonucleoprotein complex responsible for the synthesis of proteins in the cell. The small ribosomal subunit (SSU) binds messenger RNAs (mRNAs) and translates the encoded message by selecting cognate aminoacyl-transfer RNA (tRNA) molecules. The large subunit (LSU) contains the ribosomal catalytic site termed the peptidyl transferase center (PTC), which catalyzes the formation of peptide bonds, thereby polymerizing the amino acids delivered by tRNAs into a polypeptide chain. The nascent polypeptides leave the ribosome through a tunnel in the LSU and interact with protein factors that function in enzymatic processing, targeting, and the membrane insertion of nascent chains at the exit of the ribosomal tunnel. The polypeptide is Small ribosomal subunit protein eS8A (Saccharomyces cerevisiae (strain ATCC 204508 / S288c) (Baker's yeast)).